An 83-amino-acid chain; its full sequence is Small proline-rich protein 2A3 (83 aa).

5 repeat units span residues 21-29 (PKCPEPCPP), 30-38 (QVWPGPCRP), 39-47 (VMCFEPCLP), 48-56 (SVWPGPCRP), and 57-65 (VVCYEQCPP). The 5 X 9 AA approximate tandem repeats stretch occupies residues 21 to 65 (PKCPEPCPPQVWPGPCRPVMCFEPCLPSVWPGPCRPVVCYEQCPP).

It belongs to the cornifin (SPRR) family. Post-translationally, forms five pairs of intrachain disulfide bonds.

The protein resides in the secreted. It localises to the extracellular space. The protein localises to the cytoplasmic vesicle. It is found in the secretory vesicle. Its function is as follows. Gut bactericidal protein that selectively kills Gram-positive bacteria by binding to negatively charged lipids on bacterial membranes, leading to bacterial membrane permeabilization and disruption. Specifically binds lipids bearing negatively charged headgroups, such as phosphatidic acid, phosphatidylserine (PS), cardiolipin (CL), and phosphatidylinositol phosphates, but not to zwitterionic or neutral lipids. Induced by type-2 cytokines in response to helminth infection and is required to protect against helminth-induced bacterial invasion of intestinal tissue. May also be involved in the development of the cornified envelope of squamous epithelia; however, additional evidences are required to confirm this result in vivo. This is Small proline-rich protein 2A3 from Mus musculus (Mouse).